The primary structure comprises 94 residues: Small ribosomal subunit protein bS6 (94 aa).

Belongs to the bacterial ribosomal protein bS6 family.

In terms of biological role, binds together with bS18 to 16S ribosomal RNA. The protein is Small ribosomal subunit protein bS6 of Alkaliphilus metalliredigens (strain QYMF).